Reading from the N-terminus, the 235-residue chain is 2-C-methyl-D-erythritol 4-phosphate cytidylyltransferase (235 aa).

The protein belongs to the IspD/TarI cytidylyltransferase family. IspD subfamily.

The enzyme catalyses 2-C-methyl-D-erythritol 4-phosphate + CTP + H(+) = 4-CDP-2-C-methyl-D-erythritol + diphosphate. It participates in isoprenoid biosynthesis; isopentenyl diphosphate biosynthesis via DXP pathway; isopentenyl diphosphate from 1-deoxy-D-xylulose 5-phosphate: step 2/6. Its function is as follows. Catalyzes the formation of 4-diphosphocytidyl-2-C-methyl-D-erythritol from CTP and 2-C-methyl-D-erythritol 4-phosphate (MEP). This chain is 2-C-methyl-D-erythritol 4-phosphate cytidylyltransferase, found in Leptospira borgpetersenii serovar Hardjo-bovis (strain L550).